Consider the following 206-residue polypeptide: Octanoyltransferase (206 aa).

A BPL/LPL catalytic domain is found at 30–206; it reads PETNDEIWLV…EFVTLLNNSI (177 aa). Substrate is bound by residues 69-76, 137-139, and 150-152; these read RGGQVTYH, SLG, and GIA. Cys-168 acts as the Acyl-thioester intermediate in catalysis.

This sequence belongs to the LipB family.

It localises to the cytoplasm. It carries out the reaction octanoyl-[ACP] + L-lysyl-[protein] = N(6)-octanoyl-L-lysyl-[protein] + holo-[ACP] + H(+). The protein operates within protein modification; protein lipoylation via endogenous pathway; protein N(6)-(lipoyl)lysine from octanoyl-[acyl-carrier-protein]: step 1/2. Functionally, catalyzes the transfer of endogenously produced octanoic acid from octanoyl-acyl-carrier-protein onto the lipoyl domains of lipoate-dependent enzymes. Lipoyl-ACP can also act as a substrate although octanoyl-ACP is likely to be the physiological substrate. This is Octanoyltransferase from Francisella tularensis subsp. mediasiatica (strain FSC147).